The chain runs to 537 residues: Hexosyltransferase GAUT11 (537 aa).

At 1–16 (MRRWPVDHRRRGRRRL) the chain is on the cytoplasmic side. A helical; Signal-anchor for type II membrane protein membrane pass occupies residues 17-37 (SSWIWFLLGSFSVAGLVLFIV). At 38-537 (QHYHHQQDPS…HPYLQDCVTA (500 aa)) the chain is on the lumenal side. N-linked (GlcNAc...) asparagine glycans are attached at residues Asn66, Asn247, Asn299, Asn403, Asn436, and Asn525.

The protein belongs to the glycosyltransferase 8 family. Monomer. In terms of tissue distribution, expressed in roots, inflorescences, siliques, seeds, leaves and stems.

Its subcellular location is the golgi apparatus membrane. The catalysed reaction is [(1-&gt;4)-alpha-D-galacturonosyl](n) + UDP-alpha-D-galacturonate = [(1-&gt;4)-alpha-D-galacturonosyl](n+1) + UDP + H(+). It functions in the pathway glycan metabolism; pectin biosynthesis. Functionally, glycosyltransferase involved in pectin and/or xylans biosynthesis in cell walls. Required for the biosynthesis of pectin in seed coat epidermal (SCE) cells. Collaboratively with MUCI70, essential for the accumulation of seed mucilage, a gelatinous wall rich in unbranched rhamnogalacturonan I (RG I), and for shaping the surface morphology of seeds. Catalyzes homogalacturonan (HG) elongation by acting as an HG alpha-1,4 galacturonic acid transferase. The chain is Hexosyltransferase GAUT11 from Arabidopsis thaliana (Mouse-ear cress).